The sequence spans 210 residues: Riboflavin kinase (210 aa).

The H-T-H motif-like stretch occupies residues 1 to 81 (MECKERRLIG…DLLRYFNIAS (81 aa)). The segment at 82 to 210 (IRLIGRVISG…GDIVEVEILL (129 aa)) is riboflavin kinase. 91–96 (GLGEGA) is a CDP binding site. Thr120 and Asn122 together coordinate Mg(2+). FMN contacts are provided by Thr177 and Glu185. 190 to 193 (VKLR) serves as a coordination point for CDP.

It belongs to the archaeal riboflavin kinase family. Mg(2+) serves as cofactor.

It carries out the reaction riboflavin + CTP = CDP + FMN + H(+). Its pathway is cofactor biosynthesis; FMN biosynthesis; FMN from riboflavin (CTP route): step 1/1. Its function is as follows. Catalyzes the CTP-dependent phosphorylation of riboflavin (vitamin B2) to form flavin mononucleotide (FMN). The polypeptide is Riboflavin kinase (ribK) (Pyrobaculum aerophilum (strain ATCC 51768 / DSM 7523 / JCM 9630 / CIP 104966 / NBRC 100827 / IM2)).